The following is a 75-amino-acid chain: MEAEKQSDIKGTIAFDTHGNVIESTGVGSQRIEDIGDLSKVTLDAEGFAQVQGDSLLVHLYKRNDITLAVYTSAQ.

In Saccharomyces cerevisiae (strain ATCC 204508 / S288c) (Baker's yeast), this protein is Protein EGO2.